We begin with the raw amino-acid sequence, 109 residues long: Large ribosomal subunit protein uL22 (109 aa).

This sequence belongs to the universal ribosomal protein uL22 family. In terms of assembly, part of the 50S ribosomal subunit.

In terms of biological role, this protein binds specifically to 23S rRNA; its binding is stimulated by other ribosomal proteins, e.g. L4, L17, and L20. It is important during the early stages of 50S assembly. It makes multiple contacts with different domains of the 23S rRNA in the assembled 50S subunit and ribosome. Functionally, the globular domain of the protein is located near the polypeptide exit tunnel on the outside of the subunit, while an extended beta-hairpin is found that lines the wall of the exit tunnel in the center of the 70S ribosome. The protein is Large ribosomal subunit protein uL22 of Ralstonia nicotianae (strain ATCC BAA-1114 / GMI1000) (Ralstonia solanacearum).